A 517-amino-acid chain; its full sequence is T-complex protein 11-like protein 2 (517 aa).

The disordered stretch occupies residues 1-59; sequence MPFNGEKQCVSEDQQSDSESSRFAEGVASLSDYECSRQSFTSDSSSKSSSPASTSPPRG. Ser16 is modified (phosphoserine). The segment covering 36-55 has biased composition (low complexity); the sequence is SRQSFTSDSSSKSSSPASTS.

Belongs to the TCP11 family. As to quaternary structure, interacts with FMNL2; this interaction promotes muscle-derived satellite cell (MDSC) migration and differentiation.

Its subcellular location is the cytoplasm. It localises to the cytoskeleton. Promotes the migration of muscle-derived satellite cells (MDSCs) during differentiation throught interaction with FMNL2 and therefore may participate in microfilament assembly. The sequence is that of T-complex protein 11-like protein 2 from Mus musculus (Mouse).